The primary structure comprises 398 residues: Argininosuccinate synthase (398 aa).

An ATP-binding site is contributed by 8–16 (AYSGGLDTS). Position 87 (Y87) interacts with L-citrulline. G117 provides a ligand contact to ATP. Positions 119, 123, and 124 each coordinate L-aspartate. An L-citrulline-binding site is contributed by N123. Residues R127, S175, E260, and Y272 each contribute to the L-citrulline site.

Belongs to the argininosuccinate synthase family. Type 1 subfamily. As to quaternary structure, homotetramer.

The protein resides in the cytoplasm. It carries out the reaction L-citrulline + L-aspartate + ATP = 2-(N(omega)-L-arginino)succinate + AMP + diphosphate + H(+). The protein operates within amino-acid biosynthesis; L-arginine biosynthesis; L-arginine from L-ornithine and carbamoyl phosphate: step 2/3. This chain is Argininosuccinate synthase, found in Mycobacterium marinum (strain ATCC BAA-535 / M).